We begin with the raw amino-acid sequence, 391 residues long: AN1-type zinc finger and UBX domain-containing protein DDB_G0268260 (391 aa).

Positions 1–16 (MQQQSPPTAPQQQQQQ) are enriched in low complexity. The interval 1 to 20 (MQQQSPPTAPQQQQQQQRER) is disordered. 2 consecutive AN1-type zinc fingers follow at residues 26–74 (DHIG…QREN) and 118–166 (APKS…IINS). Residues C32, C37, C47, C50, C55, H58, H64, C66, C124, C129, C139, C142, C147, H150, H156, and C158 each coordinate Zn(2+). Residues 185–236 (NINNNINNNKNNNNNNNNNNNNNNNNNNNNNNNNNNNNNNNNNNNNNSNNNN) show a composition bias toward low complexity. Positions 185–240 (NINNNINNNKNNNNNNNNNNNNNNNNNNNNNNNNNNNNNNNNNNNNNSNNNNKLIY) are disordered. A UBX domain is found at 278-356 (SSEEIGEIGI…GLLPVSTLYM (79 aa)).

The chain is AN1-type zinc finger and UBX domain-containing protein DDB_G0268260 from Dictyostelium discoideum (Social amoeba).